A 418-amino-acid polypeptide reads, in one-letter code: Acetylornithine aminotransferase (418 aa).

Pyridoxal 5'-phosphate contacts are provided by residues 116–117 and F149; that span reads GA. R152 is a binding site for N(2)-acetyl-L-ornithine. 240–243 is a binding site for pyridoxal 5'-phosphate; it reads DEVQ. An N6-(pyridoxal phosphate)lysine modification is found at K269. S296 contacts N(2)-acetyl-L-ornithine. Residue T297 coordinates pyridoxal 5'-phosphate.

Belongs to the class-III pyridoxal-phosphate-dependent aminotransferase family. ArgD subfamily. Homodimer. Pyridoxal 5'-phosphate serves as cofactor.

The protein localises to the cytoplasm. It catalyses the reaction N(2)-acetyl-L-ornithine + 2-oxoglutarate = N-acetyl-L-glutamate 5-semialdehyde + L-glutamate. Its pathway is amino-acid biosynthesis; L-arginine biosynthesis; N(2)-acetyl-L-ornithine from L-glutamate: step 4/4. The sequence is that of Acetylornithine aminotransferase from Prochlorococcus marinus (strain MIT 9313).